The sequence spans 159 residues: Ribosomal RNA large subunit methyltransferase H (159 aa).

S-adenosyl-L-methionine-binding positions include G108 and F127–F132.

It belongs to the RNA methyltransferase RlmH family. In terms of assembly, homodimer.

It is found in the cytoplasm. It carries out the reaction pseudouridine(1915) in 23S rRNA + S-adenosyl-L-methionine = N(3)-methylpseudouridine(1915) in 23S rRNA + S-adenosyl-L-homocysteine + H(+). Its function is as follows. Specifically methylates the pseudouridine at position 1915 (m3Psi1915) in 23S rRNA. This chain is Ribosomal RNA large subunit methyltransferase H, found in Clostridium acetobutylicum (strain ATCC 824 / DSM 792 / JCM 1419 / IAM 19013 / LMG 5710 / NBRC 13948 / NRRL B-527 / VKM B-1787 / 2291 / W).